The sequence spans 107 residues: U1-lycotoxin-Ls1i (107 aa).

An N-terminal signal peptide occupies residues Met-1–Ser-20. A propeptide spanning residues Glu-21–Arg-41 is cleaved from the precursor. Disulfide bonds link Cys-44–Cys-59, Cys-51–Cys-68, Cys-58–Cys-86, and Cys-70–Cys-84.

Belongs to the neurotoxin 19 (CSTX) family. 04 (U1-Lctx) subfamily. Expressed by the venom gland.

The protein resides in the secreted. This chain is U1-lycotoxin-Ls1i, found in Lycosa singoriensis (Wolf spider).